The chain runs to 615 residues: Filament-like plant protein 3 (615 aa).

Residues 1–18 (MDRRSWLWRRKSSEKSPG) show a composition bias toward basic and acidic residues. Residues 1-55 (MDRRSWLWRRKSSEKSPGETESTGSVSSHSERFSDDQRSQSPELNSKPVTREEEA) form a disordered region. The segment covering 19–28 (ETESTGSVSS) has biased composition (polar residues). Over residues 29 to 38 (HSERFSDDQR) the composition is skewed to basic and acidic residues. The segment covering 39–48 (SQSPELNSKP) has biased composition (polar residues). Coiled-coil stretches lie at residues 87–121 (AEEAVSGWEKAENEAAALKQQLDASTSKVSALEDR) and 148–211 (EEAI…KSEE). 2 disordered regions span residues 258–289 (DNSSDLKSSIDNQSDYSGRVSFSDNEMQSPSE) and 319–343 (PHSEPGRKHSESNKELEKSNAHVNQ). Residues 262 to 288 (DLKSSIDNQSDYSGRVSFSDNEMQSPS) are compositionally biased toward polar residues. The segment covering 322 to 343 (EPGRKHSESNKELEKSNAHVNQ) has biased composition (basic and acidic residues). Residues 327–563 (HSESNKELEK…KQELEHHQET (237 aa)) are a coiled coil.

The protein belongs to the FPP family. As to quaternary structure, interacts with WPP/MAF proteins. Binds to COG2; this interaction promotes the association between cortical microtubules and EXO70A1. In terms of tissue distribution, accumulates in preferentially xylem cells.

It is found in the vesicle. Its function is as follows. Ensures, when in complex with COG2 and FPP2/VETH2, the correct secondary cell wall (SCW) deposition pattern by recruiting exocyst components to cortical microtubules in xylem cells during secondary cell wall deposition by recruiting EXO70A1. The polypeptide is Filament-like plant protein 3 (Arabidopsis thaliana (Mouse-ear cress)).